We begin with the raw amino-acid sequence, 156 residues long: Ribosomal RNA large subunit methyltransferase H (156 aa).

S-adenosyl-L-methionine-binding positions include Leu-73, Gly-104, and 123 to 128 (LSALTL).

Belongs to the RNA methyltransferase RlmH family. Homodimer.

It localises to the cytoplasm. It catalyses the reaction pseudouridine(1915) in 23S rRNA + S-adenosyl-L-methionine = N(3)-methylpseudouridine(1915) in 23S rRNA + S-adenosyl-L-homocysteine + H(+). Specifically methylates the pseudouridine at position 1915 (m3Psi1915) in 23S rRNA. The polypeptide is Ribosomal RNA large subunit methyltransferase H (Shewanella frigidimarina (strain NCIMB 400)).